The chain runs to 89 residues: Small ribosomal subunit protein uS15 (89 aa).

This sequence belongs to the universal ribosomal protein uS15 family. Part of the 30S ribosomal subunit. Forms a bridge to the 50S subunit in the 70S ribosome, contacting the 23S rRNA.

One of the primary rRNA binding proteins, it binds directly to 16S rRNA where it helps nucleate assembly of the platform of the 30S subunit by binding and bridging several RNA helices of the 16S rRNA. Functionally, forms an intersubunit bridge (bridge B4) with the 23S rRNA of the 50S subunit in the ribosome. The polypeptide is Small ribosomal subunit protein uS15 (Paraburkholderia phymatum (strain DSM 17167 / CIP 108236 / LMG 21445 / STM815) (Burkholderia phymatum)).